The following is a 266-amino-acid chain: MRLIPLKAAAQVGKWAAAHIVKRINEFQPTAERPFVLGLPTGGTPLATYKALIEMHKAGEVSFKHVVTFNMDEYVGLAADHPESYRSFMYNNFFNHIDIQEENINLLNGNTDDHEAECKRYEDKIKSYGKINLFMGGVGNDGHIAFNEPASSLSSRTRIKTLTEDTRIANSRFFDGDINQVPKYALTIGVGTLLDAQEIMILVTGHNKALALQAAVEGSVNHLWTVSALQLHPKAVIVCDEPSTQELKVKTVKYFTELEAKNIVGF.

The active-site Proton acceptor; for enolization step is D72. The active-site For ring-opening step is D141. The active-site Proton acceptor; for ring-opening step is H143. Residue E148 is the For ring-opening step of the active site.

It belongs to the glucosamine/galactosamine-6-phosphate isomerase family. NagB subfamily. As to quaternary structure, homohexamer.

It catalyses the reaction alpha-D-glucosamine 6-phosphate + H2O = beta-D-fructose 6-phosphate + NH4(+). It participates in amino-sugar metabolism; N-acetylneuraminate degradation; D-fructose 6-phosphate from N-acetylneuraminate: step 5/5. Its activity is regulated as follows. Allosterically activated by N-acetylglucosamine 6-phosphate (GlcNAc6P). Functionally, catalyzes the reversible isomerization-deamination of glucosamine 6-phosphate (GlcN6P) to form fructose 6-phosphate (Fru6P) and ammonium ion. In Vibrio cholerae serotype O1 (strain ATCC 39541 / Classical Ogawa 395 / O395), this protein is Glucosamine-6-phosphate deaminase.